The primary structure comprises 255 residues: MLPAERKRRIVELVSDSDGRSVESLSDHLGYSKATIRRDLRELEDRGLIERSHGGAVPVTSVGREQTYGQKEVQNLEGKRAIADRAVEELAEGQVVFFDAGTTTMEVARKVPKDGTILGVTNSPRLAIELNEEDNEVKLTGGTLRRRTKALVGPTAESFMERTNFDLLFLGTNALDVESGLTTPNEDEARMKELMVEKAAKVVLVADLSKLGRRSFVQFASLEEIDLFITDGTLDADSREEIESAGVTVVDGVAR.

The 56-residue stretch at 3–58 (PAERKRRIVELVSDSDGRSVESLSDHLGYSKATIRRDLRELEDRGLIERSHGGAVP) folds into the HTH deoR-type domain. A DNA-binding region (H-T-H motif) is located at residues 20–39 (RSVESLSDHLGYSKATIRRD).

Transcriptional repressor of genes encoding both fructose and glucose metabolic enzymes such as phosphofructokinase (PFK) or 2-keto-3-deoxy-D-gluconate kinase (KDGK) during growth on glycerol. Required for the glycerol-mediated repression of pfkB-specific transcripts, but not needed for the high-levels of the pfkB-specific transcript present when cells are grown on fructose. The chain is HTH-type transcriptional regulator GlpR (glpR) from Haloferax volcanii (strain ATCC 29605 / DSM 3757 / JCM 8879 / NBRC 14742 / NCIMB 2012 / VKM B-1768 / DS2) (Halobacterium volcanii).